Consider the following 83-residue polypeptide: SEDDGSASPESQEMSYTELPCPSICPLIYAPVCVEDSNQDFYLFVNECEVRKCGCEAGFVYTFVPREMCKATTSLCPMQTKSS.

Phosphoserine is present on residues serine 8, serine 11, and serine 15. Intrachain disulfides connect cysteine 21-cysteine 55, cysteine 25-cysteine 48, cysteine 33-cysteine 69, and cysteine 53-cysteine 76.

Its function is as follows. Serine protease inhibitor. Inhibits porcine pancreatic elastase with a Ki of 58.3 nM, human neutrophil elastase with a Ki of 3.6 nM, cathepsin G with a Ki of 153.5 nM, chymotrypsin with a Ki of 26.7 nM and subtilisin with a Ki of 0.68 nM. Does not inhibit neutrophil protease 3 or pancreatic trypsin. In Schistocerca gregaria (Desert locust), this protein is Greglin.